An 83-amino-acid polypeptide reads, in one-letter code: Disintegrin bitistatin (83 aa).

Residues 2–83 form the Disintegrin domain; that stretch reads PPVCGNKILE…GKSSDCPWNH (82 aa). 10 disulfides stabilise this stretch: Cys5–Cys24, Cys5–Cys34, Cys16–Cys29, Cys16–Cys34, Cys18–Cys24, Cys18–Cys29, Cys28–Cys51, Cys42–Cys48, Cys47–Cys72, and Cys60–Cys79. Positions 64 to 66 match the Cell attachment site motif; that stretch reads RGD.

Belongs to the venom metalloproteinase (M12B) family. P-II subfamily. P-IIa sub-subfamily. In terms of assembly, monomer. Post-translationally, exists in 3 forms in the venom. The forms A, B, and C are present at 53%, 32% and 15%. The forms A and B differ by their disulfide bond pattern in the N-terminal part. No information is known about form C. Expressed by the venom gland.

Its subcellular location is the secreted. Inhibits fibrinogen interaction with platelets. Acts by binding to alpha-IIb/beta-3 (ITGA2B/ITGB3) on the platelet surface and inhibits aggregation induced by ADP, thrombin, platelet-activating factor and collagen. This Bitis arietans (African puff adder) protein is Disintegrin bitistatin.